Here is a 129-residue protein sequence, read N- to C-terminus: Phosphomevalonate dehydratase small subunit (129 aa).

S61 acts as the Proton acceptor in catalysis.

Belongs to the AcnX type II small subunit family. Heterodimer composed of a large subunit (PMDh-L) and a small subunit (PMDh-S).

The enzyme catalyses (R)-5-phosphomevalonate = (2E)-3-methyl-5-phosphooxypent-2-enoate + H2O. It participates in isoprenoid biosynthesis; isopentenyl diphosphate biosynthesis via mevalonate pathway. Its function is as follows. Component of a hydro-lyase that catalyzes the dehydration of mevalonate 5-phosphate (MVA5P) to form trans-anhydromevalonate 5-phosphate (tAHMP). Involved in the archaeal mevalonate (MVA) pathway, which provides fundamental precursors for isoprenoid biosynthesis, such as isopentenyl diphosphate (IPP) and dimethylallyl diphosphate (DMAPP). In Methanocaldococcus jannaschii (strain ATCC 43067 / DSM 2661 / JAL-1 / JCM 10045 / NBRC 100440) (Methanococcus jannaschii), this protein is Phosphomevalonate dehydratase small subunit.